The primary structure comprises 251 residues: Triosephosphate isomerase (251 aa).

9 to 11 (NWK) is a binding site for substrate. The Electrophile role is filled by His95. Catalysis depends on Glu167, which acts as the Proton acceptor. Residues Gly173, Ser213, and 234–235 (GG) contribute to the substrate site. Phosphoserine is present on Ser213.

It belongs to the triosephosphate isomerase family. In terms of assembly, homodimer.

The protein localises to the cytoplasm. It carries out the reaction D-glyceraldehyde 3-phosphate = dihydroxyacetone phosphate. Its pathway is carbohydrate biosynthesis; gluconeogenesis. It participates in carbohydrate degradation; glycolysis; D-glyceraldehyde 3-phosphate from glycerone phosphate: step 1/1. Functionally, involved in the gluconeogenesis. Catalyzes stereospecifically the conversion of dihydroxyacetone phosphate (DHAP) to D-glyceraldehyde-3-phosphate (G3P). This is Triosephosphate isomerase from Bacillus cytotoxicus (strain DSM 22905 / CIP 110041 / 391-98 / NVH 391-98).